The sequence spans 760 residues: Polyribonucleotide nucleotidyltransferase (760 aa).

2 residues coordinate Mg(2+): Asp-492 and Asp-498. The 60-residue stretch at 559–618 folds into the KH domain; the sequence is PQHAEVFVNPDIIRIIIGPGGKNIKAITATTGASIDIEDSGRVSIFAPTLEAMEMAREMV. The S1 motif domain occupies 628–702; sequence GKNYTGKVRK…SRKAVLLEEQ (75 aa). The segment at 706–760 is disordered; it reads WKPEDTARPSGPREGGRRDGGRDGRRDGGRDGRRDGGRDGGRRDGGRRDGGRDRN. Positions 719-760 are enriched in basic and acidic residues; that stretch reads EGGRRDGGRDGRRDGGRDGRRDGGRDGGRRDGGRRDGGRDRN.

Belongs to the polyribonucleotide nucleotidyltransferase family. It depends on Mg(2+) as a cofactor.

The protein resides in the cytoplasm. The catalysed reaction is RNA(n+1) + phosphate = RNA(n) + a ribonucleoside 5'-diphosphate. Involved in mRNA degradation. Catalyzes the phosphorolysis of single-stranded polyribonucleotides processively in the 3'- to 5'-direction. The polypeptide is Polyribonucleotide nucleotidyltransferase (Nitratidesulfovibrio vulgaris (strain ATCC 29579 / DSM 644 / CCUG 34227 / NCIMB 8303 / VKM B-1760 / Hildenborough) (Desulfovibrio vulgaris)).